The chain runs to 523 residues: 2-hydroxyisoflavanone synthase (523 aa).

A helical transmembrane segment spans residues 2–22; it reads LVELAITLLVIALFIHLRPTL. Residue Cys450 participates in heme binding.

It belongs to the cytochrome P450 family. Requires heme as cofactor.

It localises to the microsome membrane. The enzyme catalyses (2S)-liquiritigenin + reduced [NADPH--hemoprotein reductase] + O2 = (2R,3S)-2,4',7-trihydroxyisoflavanone + oxidized [NADPH--hemoprotein reductase] + H2O + H(+). It carries out the reaction (2S)-naringenin + reduced [NADPH--hemoprotein reductase] + O2 = 2-hydroxy-2,3-dihydrogenistein + oxidized [NADPH--hemoprotein reductase] + H2O + H(+). 2-hydroxyisoflavanone synthase, which catalyzes the hydroxylation associated with 1,2-aryl migration of flavanones. Converts liquiritigenin and naringenin into highly unstable precursors of the isoflavones daidzein and genistein. Acts only on substrates with (2S)-chirality. The chain is 2-hydroxyisoflavanone synthase (CYP93C2) from Glycyrrhiza echinata (Licorice).